We begin with the raw amino-acid sequence, 69 residues long: Small ribosomal subunit protein uS7 (69 aa).

This sequence belongs to the universal ribosomal protein uS7 family. Part of the 30S ribosomal subunit.

In terms of biological role, one of the primary rRNA binding proteins, it binds directly to 16S rRNA where it nucleates assembly of the head domain of the 30S subunit. Is located at the subunit interface close to the decoding center. The protein is Small ribosomal subunit protein uS7 (rps7) of Methanococcoides methylutens.